A 131-amino-acid chain; its full sequence is Transcription antitermination protein NusB (131 aa).

The protein belongs to the NusB family.

In terms of biological role, involved in transcription antitermination. Required for transcription of ribosomal RNA (rRNA) genes. Binds specifically to the boxA antiterminator sequence of the ribosomal RNA (rrn) operons. The chain is Transcription antitermination protein NusB from Agathobacter rectalis (strain ATCC 33656 / DSM 3377 / JCM 17463 / KCTC 5835 / VPI 0990) (Eubacterium rectale).